A 128-amino-acid polypeptide reads, in one-letter code: Small ribosomal subunit protein uS12 (128 aa).

Positions 1 to 25 (MPTIQQLIRRGRKTKASKTASPALE) are disordered. A 3-methylthioaspartic acid modification is found at Asp89. A disordered region spans residues 101–128 (SLDTSGVADRRNSRSKYGAKRPKEAAAK).

It belongs to the universal ribosomal protein uS12 family. In terms of assembly, part of the 30S ribosomal subunit. Contacts proteins S8 and S17. May interact with IF1 in the 30S initiation complex.

In terms of biological role, with S4 and S5 plays an important role in translational accuracy. Functionally, interacts with and stabilizes bases of the 16S rRNA that are involved in tRNA selection in the A site and with the mRNA backbone. Located at the interface of the 30S and 50S subunits, it traverses the body of the 30S subunit contacting proteins on the other side and probably holding the rRNA structure together. The combined cluster of proteins S8, S12 and S17 appears to hold together the shoulder and platform of the 30S subunit. The chain is Small ribosomal subunit protein uS12 from Chlorobium phaeobacteroides (strain BS1).